We begin with the raw amino-acid sequence, 488 residues long: N-succinylglutamate 5-semialdehyde dehydrogenase (488 aa).

Residue 221 to 226 (GSSRTG) coordinates NAD(+). Active-site residues include Glu244 and Cys278.

Belongs to the aldehyde dehydrogenase family. AstD subfamily.

It carries out the reaction N-succinyl-L-glutamate 5-semialdehyde + NAD(+) + H2O = N-succinyl-L-glutamate + NADH + 2 H(+). It functions in the pathway amino-acid degradation; L-arginine degradation via AST pathway; L-glutamate and succinate from L-arginine: step 4/5. Catalyzes the NAD-dependent reduction of succinylglutamate semialdehyde into succinylglutamate. This is N-succinylglutamate 5-semialdehyde dehydrogenase from Pseudomonas savastanoi pv. phaseolicola (strain 1448A / Race 6) (Pseudomonas syringae pv. phaseolicola (strain 1448A / Race 6)).